The primary structure comprises 308 residues: MGNVVYKLTSKEIQSLMAQTTFETTKLPQGMKARTRYQNTVINIYSSGKVMFQGKNAEQVASQLLPDKQSTTGKHTSSNTTSIQYNHFHCIGSDEAGSGDYFGPLTVCAAYVSQSHIKILKELGVDDSKKLNDTKIVDLAEQLITFIPHSLLTLDNVKYNERQSLGWSQVKMKAVLHNEAIKNVIQKIEQDQLDYIVIDQFAKREVYQHYALSALPFPDKTKFETKGESKSLAIATASIISRYAFVKHMDHISKKLHMEIPKGASNKVDLIAAKVIQKYDIQQLDTISKKHFKNRDKAIHLINQKYNK.

The RNase H type-2 domain occupies 88 to 304 (FHCIGSDEAG…RDKAIHLINQ (217 aa)). A divalent metal cation-binding residues include Asp-94, Glu-95, and Asp-199.

Belongs to the RNase HII family. RnhC subfamily. Mn(2+) is required as a cofactor. Requires Mg(2+) as cofactor.

The protein resides in the cytoplasm. The catalysed reaction is Endonucleolytic cleavage to 5'-phosphomonoester.. Endonuclease that specifically degrades the RNA of RNA-DNA hybrids. In Staphylococcus epidermidis (strain ATCC 35984 / DSM 28319 / BCRC 17069 / CCUG 31568 / BM 3577 / RP62A), this protein is Ribonuclease HIII.